The following is a 111-amino-acid chain: Iron-sulfur cluster assembly protein CyaY (111 aa).

This sequence belongs to the frataxin family.

In terms of biological role, involved in iron-sulfur (Fe-S) cluster assembly. May act as a regulator of Fe-S biogenesis. The chain is Iron-sulfur cluster assembly protein CyaY from Cupriavidus necator (strain ATCC 17699 / DSM 428 / KCTC 22496 / NCIMB 10442 / H16 / Stanier 337) (Ralstonia eutropha).